A 440-amino-acid polypeptide reads, in one-letter code: GTPase Der (440 aa).

EngA-type G domains follow at residues 3-167 (PIIA…PYDR) and 176-351 (TRIA…EQYC). Residues 9 to 16 (GRPNVGKS), 56 to 60 (DTGGF), 119 to 122 (NKVD), 182 to 189 (GRPNVGKS), 229 to 233 (DTAGI), and 294 to 297 (NKWD) each bind GTP. A KH-like domain is found at 352–436 (KRVTTGELNR…PLKLIFRGRD (85 aa)).

This sequence belongs to the TRAFAC class TrmE-Era-EngA-EngB-Septin-like GTPase superfamily. EngA (Der) GTPase family. Associates with the 50S ribosomal subunit.

GTPase that plays an essential role in the late steps of ribosome biogenesis. In Geobacter sp. (strain M21), this protein is GTPase Der.